The sequence spans 416 residues: Serine--tRNA ligase (416 aa).

232–234 is a binding site for L-serine; sequence TAE. An ATP-binding site is contributed by 263 to 265; that stretch reads RKE. Glu-286 contributes to the L-serine binding site. An ATP-binding site is contributed by 350 to 353; the sequence is EISS. Ser-384 lines the L-serine pocket.

It belongs to the class-II aminoacyl-tRNA synthetase family. Type-1 seryl-tRNA synthetase subfamily. As to quaternary structure, homodimer. The tRNA molecule binds across the dimer.

The protein resides in the cytoplasm. It catalyses the reaction tRNA(Ser) + L-serine + ATP = L-seryl-tRNA(Ser) + AMP + diphosphate + H(+). The catalysed reaction is tRNA(Sec) + L-serine + ATP = L-seryl-tRNA(Sec) + AMP + diphosphate + H(+). It functions in the pathway aminoacyl-tRNA biosynthesis; selenocysteinyl-tRNA(Sec) biosynthesis; L-seryl-tRNA(Sec) from L-serine and tRNA(Sec): step 1/1. Functionally, catalyzes the attachment of serine to tRNA(Ser). Is also able to aminoacylate tRNA(Sec) with serine, to form the misacylated tRNA L-seryl-tRNA(Sec), which will be further converted into selenocysteinyl-tRNA(Sec). The polypeptide is Serine--tRNA ligase (Nautilia profundicola (strain ATCC BAA-1463 / DSM 18972 / AmH)).